A 162-amino-acid polypeptide reads, in one-letter code: NADH-quinone oxidoreductase subunit I (162 aa).

4Fe-4S ferredoxin-type domains are found at residues 53 to 83 (LRRYPNGEERCIACKLCEAVCPALAITIDSA) and 93 to 122 (TRYDIDLFKCIFCGFCEESCPVDSIVETHI). The [4Fe-4S] cluster site is built by cysteine 63, cysteine 66, cysteine 69, cysteine 73, cysteine 102, cysteine 105, cysteine 108, and cysteine 112.

The protein belongs to the complex I 23 kDa subunit family. NDH-1 is composed of 14 different subunits. Subunits NuoA, H, J, K, L, M, N constitute the membrane sector of the complex. Requires [4Fe-4S] cluster as cofactor.

Its subcellular location is the cell inner membrane. It carries out the reaction a quinone + NADH + 5 H(+)(in) = a quinol + NAD(+) + 4 H(+)(out). In terms of biological role, NDH-1 shuttles electrons from NADH, via FMN and iron-sulfur (Fe-S) centers, to quinones in the respiratory chain. The immediate electron acceptor for the enzyme in this species is believed to be ubiquinone. Couples the redox reaction to proton translocation (for every two electrons transferred, four hydrogen ions are translocated across the cytoplasmic membrane), and thus conserves the redox energy in a proton gradient. This Xanthomonas axonopodis pv. citri (strain 306) protein is NADH-quinone oxidoreductase subunit I.